Here is a 121-residue protein sequence, read N- to C-terminus: Large ribosomal subunit protein bL12 (121 aa).

Belongs to the bacterial ribosomal protein bL12 family. In terms of assembly, homodimer. Part of the ribosomal stalk of the 50S ribosomal subunit. Forms a multimeric L10(L12)X complex, where L10 forms an elongated spine to which 2 to 4 L12 dimers bind in a sequential fashion. Binds GTP-bound translation factors.

Forms part of the ribosomal stalk which helps the ribosome interact with GTP-bound translation factors. Is thus essential for accurate translation. The chain is Large ribosomal subunit protein bL12 from Mesomycoplasma hyopneumoniae (strain 7448) (Mycoplasma hyopneumoniae).